The chain runs to 272 residues: MKNTGKRIDLIANRKPQXQRVLYELRDRLKRNQFILNXTNPDIVISIGGDGMLLSAFHKYENQLDKVRFIGLHTGHLGFYTDYRDFELDKLVTNLQLDTGARVSYPVLNVKVFLENGEVKIFRALNEASIRRSDRTMVADIVINGVPFERFRGDGLTVSTPTGSTAYNKSLGGAVLHPTIEALQLTEIASLNNRVYRTLGSSIIVPKKDKIELIPTRNDYHTISVDNSVYSFRNIERIEYQIDHHKIHFVATPSHTSFWNRVKDAFIGEVDE.

The active-site Proton acceptor is the Asp-50. Residues 50–51, 126–127, Arg-152, Asp-154, 165–170, and Ala-189 contribute to the NAD(+) site; these read DG, NE, and TAYNKS.

Belongs to the NAD kinase family. A divalent metal cation is required as a cofactor.

It is found in the cytoplasm. The enzyme catalyses NAD(+) + ATP = ADP + NADP(+) + H(+). Functionally, involved in the regulation of the intracellular balance of NAD and NADP, and is a key enzyme in the biosynthesis of NADP. Catalyzes specifically the phosphorylation on 2'-hydroxyl of the adenosine moiety of NAD to yield NADP. The polypeptide is NAD kinase (Streptococcus pneumoniae serotype 19F (strain G54)).